The following is a 137-amino-acid chain: BolA-like protein 1 (137 aa).

At S81 the chain carries Phosphoserine. Positions 114-137 (WGENSQLDTSPPCLGGNKKTLGTP) are disordered.

The protein belongs to the BolA/IbaG family. Interacts with GLRX5.

The protein resides in the mitochondrion. Functionally, acts as a mitochondrial iron-sulfur (Fe-S) cluster assembly factor that facilitates (Fe-S) cluster insertion into a subset of mitochondrial proteins. Probably acts together with the monothiol glutaredoxin GLRX5. May protect cells against oxidative stress. In Pongo abelii (Sumatran orangutan), this protein is BolA-like protein 1 (BOLA1).